The primary structure comprises 233 residues: Small ribosomal subunit protein eS4 (233 aa).

The S4 RNA-binding domain occupies 37-99 (VPLVVVLRDV…RDEYYRVFPD (63 aa)).

Belongs to the eukaryotic ribosomal protein eS4 family.

The protein is Small ribosomal subunit protein eS4 of Halobacterium salinarum (strain ATCC 29341 / DSM 671 / R1).